The following is a 489-amino-acid chain: Dihydropyrimidinase 1 (489 aa).

The Zn(2+) site is built by His-61, His-63, and Lys-156. Lys-156 carries the post-translational modification N6-carboxylysine. Tyr-161 serves as a coordination point for substrate. The Zn(2+) site is built by His-189 and His-245. Ser-295 serves as a coordination point for substrate. A Zn(2+)-binding site is contributed by Asp-323. Asn-344 is a binding site for substrate.

It belongs to the metallo-dependent hydrolases superfamily. Hydantoinase/dihydropyrimidinase family. Homotetramer. The cofactor is Zn(2+). In terms of processing, carboxylation allows a single lysine to coordinate two zinc ions. In terms of tissue distribution, in L1-L2 larvae, expressed in body hypodermal cells, hemidesmosomes and in a neuronal cell between the pharynx and ring neuropil. In adults, expression is seen in body hypodermal cells and pharynx.

It is found in the nucleus. The catalysed reaction is 5,6-dihydrouracil + H2O = 3-(carbamoylamino)propanoate + H(+). In Caenorhabditis elegans, this protein is Dihydropyrimidinase 1 (dhp-1).